Consider the following 329-residue polypeptide: Sex comb on midleg-like protein 1 (329 aa).

The disordered stretch occupies residues 125–194 (NEVHESFSYP…SDFSEHNYQP (70 aa)). Phosphoserine is present on Ser-138. Residues 159–168 (FRMEEYQRAE) show a composition bias toward basic and acidic residues. Ser-238 carries the post-translational modification Phosphoserine. Residues 258-325 (WSVEAVVLFL…YYIDRLKQGK (68 aa)) form the SAM domain.

The protein belongs to the SCM family. As to expression, highly expressed in testis and pancreas. Preferentially expressed in the germ stem cells of testis.

The protein resides in the nucleus. Its function is as follows. Putative Polycomb group (PcG) protein. PcG proteins act by forming multiprotein complexes, which are required to maintain the transcriptionally repressive state of homeotic genes throughout development. May be involved in spermatogenesis during sexual maturation. The protein is Sex comb on midleg-like protein 1 (SCML1) of Macaca mulatta (Rhesus macaque).